We begin with the raw amino-acid sequence, 207 residues long: Thiamine-phosphate synthase (207 aa).

4-amino-2-methyl-5-(diphosphooxymethyl)pyrimidine-binding positions include glutamine 35–lysine 39 and asparagine 67. Aspartate 68 and aspartate 86 together coordinate Mg(2+). 4-amino-2-methyl-5-(diphosphooxymethyl)pyrimidine is bound at residue threonine 105. Serine 132–threonine 134 serves as a coordination point for 2-[(2R,5Z)-2-carboxy-4-methylthiazol-5(2H)-ylidene]ethyl phosphate. Residue lysine 135 participates in 4-amino-2-methyl-5-(diphosphooxymethyl)pyrimidine binding. Glycine 162 serves as a coordination point for 2-[(2R,5Z)-2-carboxy-4-methylthiazol-5(2H)-ylidene]ethyl phosphate.

Belongs to the thiamine-phosphate synthase family. The cofactor is Mg(2+).

The catalysed reaction is 2-[(2R,5Z)-2-carboxy-4-methylthiazol-5(2H)-ylidene]ethyl phosphate + 4-amino-2-methyl-5-(diphosphooxymethyl)pyrimidine + 2 H(+) = thiamine phosphate + CO2 + diphosphate. It carries out the reaction 2-(2-carboxy-4-methylthiazol-5-yl)ethyl phosphate + 4-amino-2-methyl-5-(diphosphooxymethyl)pyrimidine + 2 H(+) = thiamine phosphate + CO2 + diphosphate. It catalyses the reaction 4-methyl-5-(2-phosphooxyethyl)-thiazole + 4-amino-2-methyl-5-(diphosphooxymethyl)pyrimidine + H(+) = thiamine phosphate + diphosphate. It functions in the pathway cofactor biosynthesis; thiamine diphosphate biosynthesis; thiamine phosphate from 4-amino-2-methyl-5-diphosphomethylpyrimidine and 4-methyl-5-(2-phosphoethyl)-thiazole: step 1/1. In terms of biological role, condenses 4-methyl-5-(beta-hydroxyethyl)thiazole monophosphate (THZ-P) and 2-methyl-4-amino-5-hydroxymethyl pyrimidine pyrophosphate (HMP-PP) to form thiamine monophosphate (TMP). The polypeptide is Thiamine-phosphate synthase (Pseudomonas putida (strain ATCC 700007 / DSM 6899 / JCM 31910 / BCRC 17059 / LMG 24140 / F1)).